A 225-amino-acid polypeptide reads, in one-letter code: PKHD-type hydroxylase YbiX (225 aa).

Positions 78–177 (TLSTPLFNRY…RVASFMWIQS (100 aa)) constitute a Fe2OG dioxygenase domain. Positions 96, 98, and 158 each coordinate Fe cation. Residue Arg168 participates in 2-oxoglutarate binding.

It depends on Fe(2+) as a cofactor. L-ascorbate serves as cofactor.

This is PKHD-type hydroxylase YbiX from Escherichia coli O7:K1 (strain IAI39 / ExPEC).